Here is a 122-residue protein sequence, read N- to C-terminus: Large ribosomal subunit protein uL14 (122 aa).

This sequence belongs to the universal ribosomal protein uL14 family. Part of the 50S ribosomal subunit. Forms a cluster with proteins L3 and L19. In the 70S ribosome, L14 and L19 interact and together make contacts with the 16S rRNA in bridges B5 and B8.

Binds to 23S rRNA. Forms part of two intersubunit bridges in the 70S ribosome. The chain is Large ribosomal subunit protein uL14 from Francisella philomiragia subsp. philomiragia (strain ATCC 25017 / CCUG 19701 / FSC 153 / O#319-036).